The primary structure comprises 329 residues: Cytosolic arginine sensor for mTORC1 subunit 1 (329 aa).

S14 carries the post-translational modification Phosphoserine. ACT domains follow at residues 72–138 (AEAT…HTLA) and 260–321 (GELW…EVLQ). L-arginine contacts are provided by residues 111–112 (SV), G274, 280–281 (IV), and 300–304 (TFNFD).

The protein belongs to the GATS family. As to quaternary structure, forms homodimers and heterodimers with CASTOR2. Interacts with the GATOR2 complex which is composed of MIOS, SEC13, SEH1L, WDR24 and WDR59; the interaction is negatively regulated by arginine. Interacts with TM4SF5; the interaction is positively regulated by leucine and is negatively regulated by arginine. Phosphorylation at Ser-14 by AKT1, promoting the interaction between CASTOR1 and RNF167. Post-translationally, ubiquitinated by RNF167 via 'Lys-29'-polyubiquitination, leading to its degradation, releasing the GATOR2 complex. Ubiquitination by RNF167 is promoted by phosphorylation at Ser-14 by AKT1.

Its subcellular location is the cytoplasm. It localises to the cytosol. Functions as an intracellular arginine sensor within the amino acid-sensing branch of the TORC1 signaling pathway. As a homodimer or a heterodimer with CASTOR2, binds and inhibits the GATOR subcomplex GATOR2 and thereby mTORC1. Binding of arginine to CASTOR1 allosterically disrupts the interaction of CASTOR1-containing dimers with GATOR2 which can in turn activate mTORC1 and the TORC1 signaling pathway. This chain is Cytosolic arginine sensor for mTORC1 subunit 1, found in Pongo abelii (Sumatran orangutan).